The primary structure comprises 254 residues: Demethylmenaquinone methyltransferase (254 aa).

S-adenosyl-L-methionine-binding positions include Thr62, Asp80, 122-123 (DG), and Ser139.

It belongs to the class I-like SAM-binding methyltransferase superfamily. MenG/UbiE family.

It carries out the reaction a 2-demethylmenaquinol + S-adenosyl-L-methionine = a menaquinol + S-adenosyl-L-homocysteine + H(+). Its pathway is quinol/quinone metabolism; menaquinone biosynthesis; menaquinol from 1,4-dihydroxy-2-naphthoate: step 2/2. In terms of biological role, methyltransferase required for the conversion of demethylmenaquinol (DMKH2) to menaquinol (MKH2). This is Demethylmenaquinone methyltransferase from Parafrankia sp. (strain EAN1pec).